A 65-amino-acid polypeptide reads, in one-letter code: Large ribosomal subunit protein bL35 (65 aa).

The protein belongs to the bacterial ribosomal protein bL35 family.

This is Large ribosomal subunit protein bL35 from Prochlorococcus marinus subsp. pastoris (strain CCMP1986 / NIES-2087 / MED4).